Here is a 609-residue protein sequence, read N- to C-terminus: Snake venom metalloproteinase-disintegrin-like mocarhagin (609 aa).

Residues 1–20 (MIQALLVAICLAVFPYQGSS) form the signal peptide. Residues 21-191 (IILESGNVND…DEPIEKSSQL (171 aa)) constitute a propeptide that is removed on maturation. One can recognise a Peptidase M12B domain in the interval 205–400 (KYIEFYVVVD…DRPQCILNKP (196 aa)). Residues glutamate 208 and aspartate 292 each coordinate Ca(2+). Asparagine 303 is a glycosylation site (N-linked (GlcNAc...) asparagine). 3 disulfide bridges follow: cysteine 316-cysteine 395, cysteine 356-cysteine 379, and cysteine 358-cysteine 363. Residues histidine 341 and histidine 345 each contribute to the Zn(2+) site. Positions 395, 398, 410, 413, 415, 417, 420, and 423 each coordinate Ca(2+). One can recognise a Disintegrin domain in the interval 408–494 (PPVCGNYFVE…KCPKDSFQRN (87 aa)). 14 cysteine pairs are disulfide-bonded: cysteine 411–cysteine 440, cysteine 422–cysteine 435, cysteine 424–cysteine 430, cysteine 434–cysteine 457, cysteine 448–cysteine 454, cysteine 453–cysteine 479, cysteine 466–cysteine 486, cysteine 473–cysteine 505, cysteine 498–cysteine 510, cysteine 517–cysteine 567, cysteine 532–cysteine 575, cysteine 545–cysteine 555, cysteine 562–cysteine 601, and cysteine 595–cysteine 606. A D/ECD-tripeptide motif is present at residues 472 to 474 (DCD). An N-linked (GlcNAc...) asparagine glycan is attached at asparagine 507.

It belongs to the venom metalloproteinase (M12B) family. P-III subfamily. P-IIIa sub-subfamily. As to quaternary structure, monomer. Zn(2+) serves as cofactor. In terms of tissue distribution, expressed by the venom gland.

Its subcellular location is the secreted. Inhibited by EDTA and diisopropyl fluorophosphate (DFP). Also inhibited by an excess of zinc or calcium ions. In terms of biological role, snake venom zinc metalloproteinase that inhibits platelet aggregation by cleaving platelet glycoprotein Ib alpha (GP1BA) at Glu-298/Asp-299, and abolishes binding of von Willebrand factor (VWF) to GPIBA. Cleaves P-selectin glycoprotein ligand-1 (PSGL-1/SELPLG) at Tyr-51/Asp-52, and completely abolishes the binding of PSGL-1 to P-selectin. Anionic amino acid sequences containing sulfated tyrosines are needed for cleavages. Inhibits the thrombin-induced platelet aggregation, and the thrombin-induced release of ATP and ADP. Has lectin activity (inhibited by heparin). This Naja mossambica (Mozambique spitting cobra) protein is Snake venom metalloproteinase-disintegrin-like mocarhagin.